Consider the following 465-residue polypeptide: Na(+)-translocating NADH-quinone reductase subunit A (465 aa).

The protein belongs to the NqrA family. In terms of assembly, composed of six subunits; NqrA, NqrB, NqrC, NqrD, NqrE and NqrF.

It carries out the reaction a ubiquinone + n Na(+)(in) + NADH + H(+) = a ubiquinol + n Na(+)(out) + NAD(+). Functionally, NQR complex catalyzes the reduction of ubiquinone-1 to ubiquinol by two successive reactions, coupled with the transport of Na(+) ions from the cytoplasm to the periplasm. NqrA to NqrE are probably involved in the second step, the conversion of ubisemiquinone to ubiquinol. In Chlamydia trachomatis serovar L2 (strain ATCC VR-902B / DSM 19102 / 434/Bu), this protein is Na(+)-translocating NADH-quinone reductase subunit A.